The primary structure comprises 272 residues: Phosphate import ATP-binding protein PstB (272 aa).

One can recognise an ABC transporter domain in the interval 26 to 267 (IVVKNWNLYY…PQVKRTEDYI (242 aa)). 58–65 (GPSGCGKS) is an ATP binding site.

This sequence belongs to the ABC transporter superfamily. Phosphate importer (TC 3.A.1.7) family. In terms of assembly, the complex is composed of two ATP-binding proteins (PstB), two transmembrane proteins (PstC and PstA) and a solute-binding protein (PstS).

It localises to the cell inner membrane. The enzyme catalyses phosphate(out) + ATP + H2O = ADP + 2 phosphate(in) + H(+). Part of the ABC transporter complex PstSACB involved in phosphate import. Responsible for energy coupling to the transport system. The polypeptide is Phosphate import ATP-binding protein PstB (Hydrogenovibrio crunogenus (strain DSM 25203 / XCL-2) (Thiomicrospira crunogena)).